The sequence spans 114 residues: uncharacterized protein (114 aa).

One can recognise an HTH arsR-type domain in the interval 2 to 97 (ESEPLYKLKA…VARKVLARVL (96 aa)). The H-T-H motif DNA-binding region spans 37–60 (GELLSSDVGLESSNLSQQLGVLRR).

This is an uncharacterized protein from Mycobacterium tuberculosis (strain CDC 1551 / Oshkosh).